The primary structure comprises 331 residues: Glycerol-3-phosphate dehydrogenase [NAD(P)+] (331 aa).

NADPH-binding residues include W11, R30, and K105. Sn-glycerol 3-phosphate is bound by residues K105, G134, and S136. Residue A138 participates in NADPH binding. Sn-glycerol 3-phosphate contacts are provided by K189, D242, S252, R253, and N254. The active-site Proton acceptor is the K189. Position 253 (R253) interacts with NADPH. The NADPH site is built by V277 and E279.

Belongs to the NAD-dependent glycerol-3-phosphate dehydrogenase family.

It localises to the cytoplasm. The catalysed reaction is sn-glycerol 3-phosphate + NAD(+) = dihydroxyacetone phosphate + NADH + H(+). The enzyme catalyses sn-glycerol 3-phosphate + NADP(+) = dihydroxyacetone phosphate + NADPH + H(+). The protein operates within membrane lipid metabolism; glycerophospholipid metabolism. Functionally, catalyzes the reduction of the glycolytic intermediate dihydroxyacetone phosphate (DHAP) to sn-glycerol 3-phosphate (G3P), the key precursor for phospholipid synthesis. This is Glycerol-3-phosphate dehydrogenase [NAD(P)+] from Janthinobacterium sp. (strain Marseille) (Minibacterium massiliensis).